We begin with the raw amino-acid sequence, 1009 residues long: Rho GTPase-activating protein gacT (1009 aa).

2 disordered regions span residues 1-72 (MKNI…SRNH) and 89-117 (TSHH…QQTQ). The segment covering 12–23 (FHKDKKEGDKQD) has biased composition (basic and acidic residues). The segment covering 26-35 (GSSGSSGNSG) has biased composition (low complexity). Positions 58-69 (ESYSGDNSPTLS) are enriched in polar residues. The span at 89-103 (TSHHSHSHNHNHNHN) shows a compositional bias: basic residues. Low complexity predominate over residues 104–117 (HQLTQPIQQQQQTQ). Positions 163–351 (VPLTQVPCRA…EVFPQHHLYY (189 aa)) constitute a Rho-GAP domain. Disordered stretches follow at residues 388 to 420 (TISG…DSTA), 432 to 482 (PEQQ…TFRV), and 508 to 571 (GPSG…TTDQ). 3 stretches are compositionally biased toward low complexity: residues 394 to 415 (PSNG…ITSP), 432 to 468 (PEQQ…QPIS), and 512 to 521 (TTGTTPNGGS). The span at 522–546 (LSIGGGNGGNGGSSLSVGSGGGNGG) shows a compositional bias: gly residues. Residues 547–557 (SSLSVGSNTSV) show a composition bias toward low complexity. Residues 580–656 (AYTNNEDTKA…IEREIEKKRL (77 aa)) adopt a coiled-coil conformation. Residues 686–713 (ISTIDGSGGSNRNSKNYGNGSSSSSNRR) are disordered. Positions 695-713 (SNRNSKNYGNGSSSSSNRR) are enriched in low complexity. The stretch at 715–743 (SNTINQQLQMQLQQLQIQQQQYQQTQQSQ) forms a coiled coil. Positions 759–781 (TTTTTTTSSGSNRFSSNRYKPVD) are disordered. Polar residues predominate over residues 766–781 (SSGSNRFSSNRYKPVD). A coiled-coil region spans residues 839–952 (ENLVLLQQQY…IEEIHLLETY (114 aa)). Residues 965-1009 (STTKDLLTRSRSPTLPSSINMSTSSLGSSSSSAYNNNNNNNNVPK) form a disordered region. The segment covering 967 to 980 (TKDLLTRSRSPTLP) has biased composition (polar residues). The segment covering 981–1009 (SSINMSTSSLGSSSSSAYNNNNNNNNVPK) has biased composition (low complexity).

Its subcellular location is the cytoplasm. Its function is as follows. Rho GTPase-activating protein involved in the signal transduction pathway. In Dictyostelium discoideum (Social amoeba), this protein is Rho GTPase-activating protein gacT (gacT).